We begin with the raw amino-acid sequence, 385 residues long: Isocitrate dehydrogenase [NAD] subunit beta, mitochondrial (385 aa).

Residues 1–33 (MAALSRVRWLTRALVAAPNPGAWRSLCTSTVAQ) constitute a mitochondrion transit peptide. At Lys199 the chain carries N6-acetyllysine.

It belongs to the isocitrate and isopropylmalate dehydrogenases family. Heterooligomer of subunits alpha (IDH3A), beta (IDH3B), and gamma (IDH3G) in the apparent ratio of 2:1:1. The heterodimer containing one IDH3A and one IDH3B subunit and the heterodimer containing one IDH3A and one IDH3G subunit assemble into a heterotetramer (which contains two subunits of IDH3A, one of IDH3B and one of IDH3G) and further into the heterooctamer. Isoform A is predominant in heart muscle; also found in brain, kidney and liver. Isoform B is present in kidney and liver.

It localises to the mitochondrion. The heterotetramer and the heterodimer composed of IDH3A and IDH3G subunits can be allosterically activated by citrate (CIT) or/and ADP, and the two activators can act independently or synergistically. The heterodimer composed of IDH3A and IDH3B subunits cannot be allosterically regulated and the allosteric regulation of the heterotetramer is through the IDH3G subunit and not the IDH3B subunit. The IDH3G subunit contains the allosteric site which consists of a CIT-binding site and an ADP-binding site, and the binding of CIT and ADP causes conformational changes at the allosteric site which are transmitted to the active site in the catalytic subunit (IDH3A) through a cascade of conformational changes at the heterodimer interface, leading to stabilization of the isocitrate-binding at the active site and thus activation of the enzyme. ATP can activate the heterotetramer and the heterodimer composed of IDH3A and IDH3G subunits at low concentrations but inhibits their activities at high concentrations, whereas ATP exhibits only inhibitory effect on the heterodimer composed of IDH3A and IDH3B subunits. Its function is as follows. Plays a structural role to facilitate the assembly and ensure the full activity of the enzyme catalyzing the decarboxylation of isocitrate (ICT) into alpha-ketoglutarate. The heterodimer composed of the alpha (IDH3A) and beta (IDH3B) subunits and the heterodimer composed of the alpha (IDH3A) and gamma (IDH3G) subunits, have considerable basal activity but the full activity of the heterotetramer (containing two subunits of IDH3A, one of IDH3B and one of IDH3G) requires the assembly and cooperative function of both heterodimers. The sequence is that of Isocitrate dehydrogenase [NAD] subunit beta, mitochondrial (IDH3B) from Bos taurus (Bovine).